Consider the following 428-residue polypeptide: Dihydroorotase (428 aa).

Zn(2+)-binding residues include H59 and H61. Residues 61 to 63 (HLR) and N93 contribute to the substrate site. D151, H178, and H231 together coordinate Zn(2+). N277 lines the substrate pocket. D304 lines the Zn(2+) pocket. The active site involves D304. Substrate is bound by residues H308 and 322-323 (FG).

Belongs to the metallo-dependent hydrolases superfamily. DHOase family. Class I DHOase subfamily. Requires Zn(2+) as cofactor.

It carries out the reaction (S)-dihydroorotate + H2O = N-carbamoyl-L-aspartate + H(+). The protein operates within pyrimidine metabolism; UMP biosynthesis via de novo pathway; (S)-dihydroorotate from bicarbonate: step 3/3. Catalyzes the reversible cyclization of carbamoyl aspartate to dihydroorotate. This chain is Dihydroorotase, found in Bacillus cereus (strain AH187).